A 101-amino-acid polypeptide reads, in one-letter code: uncharacterized protein (101 aa).

The next 2 helical transmembrane spans lie at 52–72 (VVFI…VKLL) and 75–95 (LWRL…SLLG).

It localises to the endoplasmic reticulum membrane. This is an uncharacterized protein from Schizosaccharomyces pombe (strain 972 / ATCC 24843) (Fission yeast).